A 600-amino-acid polypeptide reads, in one-letter code: Aspartate--tRNA(Asp/Asn) ligase (600 aa).

Residue E187 coordinates L-aspartate. An aspartate region spans residues 211 to 214 (QIFK). L-aspartate contacts are provided by R233 and H463. An ATP-binding site is contributed by 233–235 (RDE). E497 lines the ATP pocket. R504 contributes to the L-aspartate binding site. Residue 549–552 (GVDR) coordinates ATP.

The protein belongs to the class-II aminoacyl-tRNA synthetase family. Type 1 subfamily. Homodimer.

Its subcellular location is the cytoplasm. The enzyme catalyses tRNA(Asx) + L-aspartate + ATP = L-aspartyl-tRNA(Asx) + AMP + diphosphate. In terms of biological role, aspartyl-tRNA synthetase with relaxed tRNA specificity since it is able to aspartylate not only its cognate tRNA(Asp) but also tRNA(Asn). Reaction proceeds in two steps: L-aspartate is first activated by ATP to form Asp-AMP and then transferred to the acceptor end of tRNA(Asp/Asn). This chain is Aspartate--tRNA(Asp/Asn) ligase, found in Wolbachia pipientis subsp. Culex pipiens (strain wPip).